Reading from the N-terminus, the 456-residue chain is MIKVRFAPSPTGYIHIGNTRIALFNWLYAQANNGTFILRYDDTDLERSKQEYIDGIMTDLEWLDIKPDEIHHQSKRFSRYDKVAETLKERGLLYPCYETVEELGRHRKIQLSRKLPPVYDRRALKLTKEDKRLLESQGRKPHWRFLLPNFESNPFQIKRTEISWDDIVKGKQTIDLASISDPVLIREDGSYLYTLPSVIDDIDMAITHIIRGEDHITNTGAQITIFEALNAKLPAFGHINLLTTVSGQGLSKRNSDLSICSLREEGFESMAVRCLSVLTGTSKNIEAHRDQKALLEHFSLQNTSKSAAKFDITDLISLNSHFVHELTYEEVKTRLEKLSICGEKAEYFWNTIRDNIDKVNDAALWWEIIHSDQSFDAVSFEDRAFLQQSVDLLPEGSLNDESWKIWTTALKEKTDRKGKALFMSLRLALTGRQHGPEMGKLLPLLGREKIINRLTI.

The 'HIGH' region motif lies at 8–18 (PSPTGYIHIGN). The 'KMSKS' region motif lies at 249–253 (GLSKR). Position 252 (Lys252) interacts with ATP.

It belongs to the class-I aminoacyl-tRNA synthetase family. Glutamate--tRNA ligase type 1 subfamily. In terms of assembly, monomer.

The protein localises to the cytoplasm. It catalyses the reaction tRNA(Glu) + L-glutamate + ATP = L-glutamyl-tRNA(Glu) + AMP + diphosphate. Its function is as follows. Catalyzes the attachment of glutamate to tRNA(Glu) in a two-step reaction: glutamate is first activated by ATP to form Glu-AMP and then transferred to the acceptor end of tRNA(Glu). The protein is Glutamate--tRNA ligase 2 of Bartonella bacilliformis (strain ATCC 35685 / KC583 / Herrer 020/F12,63).